A 177-amino-acid polypeptide reads, in one-letter code: Ribulose bisphosphate carboxylase small subunit, chloroplastic 4 (177 aa).

The N-terminal 56 residues, 1-56 (MASSMMASTAAAVARAGPAQTNMVPFNACRSSVPFPATRKANNDLSTLPSNGGRVS), are a transit peptide targeting the chloroplast.

This sequence belongs to the RuBisCO small chain family. In terms of assembly, heterohexadecamer of 8 large and 8 small subunits.

The protein localises to the plastid. It is found in the chloroplast. In terms of biological role, ruBisCO catalyzes two reactions: the carboxylation of D-ribulose 1,5-bisphosphate, the primary event in carbon dioxide fixation, as well as the oxidative fragmentation of the pentose substrate. Both reactions occur simultaneously and in competition at the same active site. Although the small subunit is not catalytic it is essential for maximal activity. In Lemna gibba (Swollen duckweed), this protein is Ribulose bisphosphate carboxylase small subunit, chloroplastic 4.